The primary structure comprises 208 residues: Outer-membrane lipoprotein carrier protein (208 aa).

Residues 1–21 (MRLIRTLFVAALAMGTSLAHA) form the signal peptide.

It belongs to the LolA family. As to quaternary structure, monomer.

The protein localises to the periplasm. Its function is as follows. Participates in the translocation of lipoproteins from the inner membrane to the outer membrane. Only forms a complex with a lipoprotein if the residue after the N-terminal Cys is not an aspartate (The Asp acts as a targeting signal to indicate that the lipoprotein should stay in the inner membrane). The protein is Outer-membrane lipoprotein carrier protein of Pseudomonas paraeruginosa (strain DSM 24068 / PA7) (Pseudomonas aeruginosa (strain PA7)).